Reading from the N-terminus, the 116-residue chain is Large ribosomal subunit protein bL20c (116 aa).

It belongs to the bacterial ribosomal protein bL20 family.

The protein localises to the plastid. It is found in the chloroplast. Functionally, binds directly to 23S ribosomal RNA and is necessary for the in vitro assembly process of the 50S ribosomal subunit. It is not involved in the protein synthesizing functions of that subunit. The protein is Large ribosomal subunit protein bL20c of Cyanidioschyzon merolae (strain NIES-3377 / 10D) (Unicellular red alga).